A 790-amino-acid chain; its full sequence is SH3 domain-containing protein 19 (790 aa).

Disordered regions lie at residues 21–196 (EGQT…PVLQ) and 241–374 (EPIK…MDLQ). Residue Ser65 is modified to Phosphoserine. Residues 287-296 (NTFSTVSGKL) show a composition bias toward polar residues. The segment covering 336 to 351 (QQPPTKVPPERPPPPK) has biased composition (pro residues). The segment at 342-358 (VPPERPPPPKLSATRRS) is interaction with SH3GL1. The span at 365-374 (NRSSSDMDLQ) shows a compositional bias: polar residues. Ser369 is subject to Phosphoserine. 5 consecutive SH3 domains span residues 415–477 (LSVP…PLDE), 495–554 (SGAP…VIID), 571–630 (VKGS…PVED), 661–720 (LPAE…PCPA), and 730–789 (PKGR…FLQI). The residue at position 762 (Ser762) is a Phosphoserine.

As to quaternary structure, interacts with ADAM12. Isoform 4 and isoform 5 (but not isoform 1 and isoform 2) interact with ADAM9, ADAM10, ADAM15 and ADAM17. Interacts with SH3GL1 SH3 domain. Interacts via SH3 3 and SH3 4 or SH3 4 and SH3 5 domains with SOS2. Probably forms a trimeric complex with SH3GL1 and SOS2. Interacts with SH3YL1. As to expression, widely expressed with highest levels in heart, skeletal muscle, kidney, liver, placenta, small intestine and lung. Expressed at low levels in colon, thymus, spleen and leukocytes.

The protein resides in the cytoplasm. Its subcellular location is the nucleus. Its function is as follows. May play a role in regulating A disintegrin and metalloproteases (ADAMs) in the signaling of EGFR-ligand shedding. May be involved in suppression of Ras-induced cellular transformation and Ras-mediated activation of ELK1. Plays a role in the regulation of cell morphology and cytoskeletal organization. The sequence is that of SH3 domain-containing protein 19 (SH3D19) from Homo sapiens (Human).